The primary structure comprises 223 residues: Endonuclease V (223 aa).

Positions 35 and 103 each coordinate Mg(2+).

Belongs to the endonuclease V family. Mg(2+) serves as cofactor.

It localises to the cytoplasm. It carries out the reaction Endonucleolytic cleavage at apurinic or apyrimidinic sites to products with a 5'-phosphate.. Functionally, DNA repair enzyme involved in the repair of deaminated bases. Selectively cleaves double-stranded DNA at the second phosphodiester bond 3' to a deoxyinosine leaving behind the intact lesion on the nicked DNA. In Cronobacter sakazakii (strain ATCC BAA-894) (Enterobacter sakazakii), this protein is Endonuclease V.